A 147-amino-acid polypeptide reads, in one-letter code: uncharacterized protein (147 aa).

Positions 50–138 constitute an ABM domain; the sequence is IVVAGNIKVK…LLAKPAEIKI (89 aa).

The protein belongs to the LsrG family.

This is an uncharacterized protein from Synechocystis sp. (strain ATCC 27184 / PCC 6803 / Kazusa).